A 548-amino-acid chain; its full sequence is Mercuric reductase (548 aa).

The region spanning 1-65 (MTEITVNGMT…AIAALGYQGS (65 aa)) is the HMA domain. A metal cation contacts are provided by C11 and C14. Residues A97, G117, and T122 each coordinate FAD. A disulfide bridge connects residues C123 and C128. FAD contacts are provided by K132, A198, D390, and V398. Hg(2+)-binding residues include C545 and C546.

It belongs to the class-I pyridine nucleotide-disulfide oxidoreductase family. Homodimer. FAD serves as cofactor.

The catalysed reaction is Hg + NADP(+) + H(+) = Hg(2+) + NADPH. In terms of biological role, resistance to Hg(2+) in bacteria appears to be governed by a specialized system which includes mercuric reductase. MerA protein is responsible for volatilizing mercury as Hg(0). In Pseudomonas fluorescens, this protein is Mercuric reductase (merA).